The sequence spans 177 residues: Prorelaxin (177 aa).

The N-terminal stretch at 1–22 is a signal peptide; it reads MSCKFVLQLLGFWLLLSQPCRA. Cystine bridges form between cysteine 36-cysteine 164, cysteine 48-cysteine 177, and cysteine 163-cysteine 168. The propeptide at 64-149 is connecting peptide; sequence MTEEAVSSFI…LKSLYLDTLS (86 aa). Positions 80–114 are disordered; that stretch reads FDTMPNLSEKPKTALPEGHPSLPEQQQYVPVSSDS. Positions 102–114 are enriched in polar residues; the sequence is PEQQQYVPVSSDS.

It belongs to the insulin family. Heterodimer of a B chain and an A chain linked by two disulfide bonds.

The protein localises to the secreted. Functionally, relaxin is an ovarian hormone that acts with estrogen to produce dilatation of the birth canal in many mammals. It bears mature young, and allows separation of the pelvic bones. This is Prorelaxin (RLN) from Mesocricetus auratus (Golden hamster).